A 164-amino-acid chain; its full sequence is UPF0304 protein ECA3037 (164 aa).

Belongs to the UPF0304 family.

This Pectobacterium atrosepticum (strain SCRI 1043 / ATCC BAA-672) (Erwinia carotovora subsp. atroseptica) protein is UPF0304 protein ECA3037.